Reading from the N-terminus, the 166-residue chain is Regulatory protein RecX (166 aa).

Belongs to the RecX family.

Its subcellular location is the cytoplasm. Modulates RecA activity. The protein is Regulatory protein RecX of Escherichia coli O139:H28 (strain E24377A / ETEC).